We begin with the raw amino-acid sequence, 302 residues long: Olfactory receptor 51H1 (302 aa).

Over 1-27 the chain is Extracellular; it reads MTNLNASQANHRNFILTGIPGTPDKNP. A glycan (N-linked (GlcNAc...) asparagine) is linked at N5. A helical transmembrane segment spans residues 28-48; sequence WLAFPLGFLYTLTLLGNGTIL. The Cytoplasmic segment spans residues 49–56; that stretch reads AVIKVEPS. A helical transmembrane segment spans residues 57–77; the sequence is LHEPTYYFLSILALTDVSLSM. Topologically, residues 78 to 101 are extracellular; it reads STLPSMLSIYWFNAPQIVFDACIM. The cysteines at positions 99 and 191 are disulfide-linked. Residues 102–122 form a helical membrane-spanning segment; the sequence is QMFFIHVFGIVESGVLVSMAF. Over 123 to 141 the chain is Cytoplasmic; sequence DRFVAIRNPLHYVSILTHD. A helical transmembrane segment spans residues 142-162; sequence VIRKTGIAVLTRAVCVVFPVP. Over 163 to 198 the chain is Extracellular; it reads FLIKCLPFCHSNVLSHSYCLHQNMMRLACASTRINS. The helical transmembrane segment at 199-219 threads the bilayer; that stretch reads LYGLIVVIFTLGLDVLLTLLS. The Cytoplasmic segment spans residues 220–239; sequence YVLTLKTVLGIVSRGERLKT. A helical membrane pass occupies residues 240–260; the sequence is LSTCLSHMSTVLLFYVPFMGA. The Extracellular portion of the chain corresponds to 261-276; that stretch reads ASMIHRFWEHLSPVVH. Residues 277-297 form a helical membrane-spanning segment; it reads MVMADIYLLLPPVLNPIVYSV. At 298–302 the chain is on the cytoplasmic side; it reads KTKQI.

Belongs to the G-protein coupled receptor 1 family.

It is found in the cell membrane. Its function is as follows. Odorant receptor. In Homo sapiens (Human), this protein is Olfactory receptor 51H1 (OR51H1).